Consider the following 203-residue polypeptide: uncharacterized protein (203 aa).

A helical membrane pass occupies residues 9–29 (LVVLFTIVTFGLVSPPAALMA).

Its subcellular location is the membrane. This is an uncharacterized protein from Bacillus subtilis (strain 168).